A 227-amino-acid polypeptide reads, in one-letter code: PKHD-type hydroxylase Veis_3084 (227 aa).

The tract at residues D27–E51 is disordered. A compositionally biased stretch (polar residues) spans A33 to P47. In terms of domain architecture, Fe2OG dioxygenase spans R78 to S179. H97, D99, and H160 together coordinate Fe cation. Residue R170 coordinates 2-oxoglutarate.

The cofactor is Fe(2+). Requires L-ascorbate as cofactor.

The chain is PKHD-type hydroxylase Veis_3084 from Verminephrobacter eiseniae (strain EF01-2).